Here is a 789-residue protein sequence, read N- to C-terminus: Ribosomal protein S6 kinase alpha-5 (789 aa).

In terms of domain architecture, Protein kinase 1 spans 39–308; sequence FELLKVLGTG…ADEIKQHPFF (270 aa). Residues 45–53 and Lys71 each bind ATP; that span reads LGTGAYGKV. The Proton acceptor role is filled by Asp167. Ser202 is modified (phosphoserine; by autocatalysis). One can recognise an AGC-kinase C-terminal domain in the interval 309-377; it reads QNINWDDLAA…VAPSILFKRN (69 aa). A Phosphoserine modification is found at Ser350. 2 positions are modified to phosphoserine; by autocatalysis: Ser366 and Ser371. Residues 416–677 enclose the Protein kinase 2 domain; it reads DLKEKPLGEG…MSSLRYNEWL (262 aa). ATP contacts are provided by residues 422–430 and Lys445; that span reads LGEGSFSIC. Catalysis depends on Asp534, which acts as the Proton acceptor. 2 positions are modified to phosphothreonine: Thr571 and Thr690. The disordered stretch occupies residues 731–789; the sequence is AKRRKMKKTSTSTETRSSSSESSHSSSSHSHGKTTPTKTLQPTNPTDSNNPETIFQFSD. A compositionally biased stretch (low complexity) spans 739-769; sequence TSTSTETRSSSSESSHSSSSHSHGKTTPTKT. Ser740, Ser742, and Ser748 each carry phosphoserine; by autocatalysis. A compositionally biased stretch (polar residues) spans 770 to 789; that stretch reads LQPTNPTDSNNPETIFQFSD.

This sequence belongs to the protein kinase superfamily. AGC Ser/Thr protein kinase family. S6 kinase subfamily. Requires Mg(2+) as cofactor. Ser-366 and Thr-571 phosphorylation is required for kinase activity. Ser-366 and Ser-202 are autophosphorylated by the C-terminal kinase domain, and their phosphorylation is essential for the catalytic activity of the N-terminal kinase domain. Phosphorylated at Ser-350, Thr-571 and Thr-690 by MAP kinases. Autophosphorylated at Ser-740, Ser-742 and Ser-748 by the N-terminal kinase domain. In terms of tissue distribution, widely expressed with high levels in heart, brain and placenta. Less abundant in lung, kidney and liver.

The protein resides in the nucleus. It catalyses the reaction L-seryl-[protein] + ATP = O-phospho-L-seryl-[protein] + ADP + H(+). The catalysed reaction is L-threonyl-[protein] + ATP = O-phospho-L-threonyl-[protein] + ADP + H(+). With respect to regulation, activated by phosphorylation at Ser-350, Thr-571 and Thr-690 by MAP kinases, and by further autophosphorylation of Ser-202, Ser-366 and Ser-371 by the activated C-terminal kinase domain. The active N-terminal kinase domain finally phosphorylates downstream substrates, as well as Ser-740, Ser-742 and Ser-748 in its own C-terminal region. Its function is as follows. Serine/threonine-protein kinase that is required for the mitogen or stress-induced phosphorylation of the transcription factors CREB1 and ATF1 and that contributes to gene activation by histone phosphorylation. Phosphorylates CREB1 and ATF1 in response to mitogenic or stress stimuli such as UV-C irradiation, epidermal growth factor (EGF) and anisomycin. Directly represses transcription via phosphorylation of 'Ser-1' of histone H2A. Phosphorylates 'Ser-10' of histone H3 in response to mitogenics, stress stimuli and EGF, which results in the transcriptional activation of several immediate early genes, including proto-oncogenes c-fos/FOS and c-jun/JUN. May also phosphorylate 'Ser-28' of histone H3. Mediates the mitogen- and stress-induced phosphorylation of high mobility group protein 1 (HMGN1/HMG14). The protein is Ribosomal protein S6 kinase alpha-5 (RPS6KA5) of Gallus gallus (Chicken).